The primary structure comprises 262 residues: 3-methyl-2-oxobutanoate hydroxymethyltransferase (262 aa).

Positions 44 and 83 each coordinate Mg(2+). 3-methyl-2-oxobutanoate contacts are provided by residues 44-45, Asp83, and Lys112; that span reads DS. Position 114 (Glu114) interacts with Mg(2+). The Proton acceptor role is filled by Glu177.

This sequence belongs to the PanB family. In terms of assembly, homodecamer; pentamer of dimers. It depends on Mg(2+) as a cofactor.

It localises to the cytoplasm. The catalysed reaction is 3-methyl-2-oxobutanoate + (6R)-5,10-methylene-5,6,7,8-tetrahydrofolate + H2O = 2-dehydropantoate + (6S)-5,6,7,8-tetrahydrofolate. It functions in the pathway cofactor biosynthesis; coenzyme A biosynthesis. Functionally, catalyzes the reversible reaction in which hydroxymethyl group from 5,10-methylenetetrahydrofolate is transferred onto alpha-ketoisovalerate to form ketopantoate. This is 3-methyl-2-oxobutanoate hydroxymethyltransferase from Metallosphaera sedula (strain ATCC 51363 / DSM 5348 / JCM 9185 / NBRC 15509 / TH2).